Consider the following 61-residue polypeptide: Small ribosomal subunit protein uS14 (61 aa).

Residues cysteine 24, cysteine 27, cysteine 40, and cysteine 43 each contribute to the Zn(2+) site.

Belongs to the universal ribosomal protein uS14 family. Zinc-binding uS14 subfamily. Part of the 30S ribosomal subunit. Contacts proteins S3 and S10. It depends on Zn(2+) as a cofactor.

Its function is as follows. Binds 16S rRNA, required for the assembly of 30S particles and may also be responsible for determining the conformation of the 16S rRNA at the A site. The sequence is that of Small ribosomal subunit protein uS14 from Clostridium botulinum (strain Alaska E43 / Type E3).